A 360-amino-acid chain; its full sequence is Uptake hydrogenase small subunit (360 aa).

The segment at residues 1–43 (MVETFYEVMRRQGISRRSFLKYCSLTATSLGLGPSFLPQIAHA) is a signal peptide (tat-type signal). [4Fe-4S] cluster contacts are provided by C60, C63, C158, C192, H230, C233, C258, and C264. The [3Fe-4S] cluster site is built by C273, C292, and C295.

It belongs to the [NiFe]/[NiFeSe] hydrogenase small subunit family. Heterodimer of a large and a small subunit. [4Fe-4S] cluster is required as a cofactor. The cofactor is [3Fe-4S] cluster. Predicted to be exported by the Tat system. The position of the signal peptide cleavage has been experimentally proven.

It localises to the cell membrane. It catalyses the reaction H2 + A = AH2. In terms of biological role, this enzyme recycles the H(2) produced by nitrogenase to increase the production of ATP and to protect nitrogenase against inhibition or damage by O(2) under carbon- or phosphate-limited conditions. In Cupriavidus necator (strain ATCC 17699 / DSM 428 / KCTC 22496 / NCIMB 10442 / H16 / Stanier 337) (Ralstonia eutropha), this protein is Uptake hydrogenase small subunit (hoxK).